The following is a 375-amino-acid chain: Chaperone protein DnaJ (375 aa).

The 66-residue stretch at 5–70 folds into the J domain; sequence DYYEVLGVER…SKRAAFDQYG (66 aa). A CR-type zinc finger spans residues 134–212; sequence GTTVSIRVPT…CHGEGRVEEY (79 aa). The Zn(2+) site is built by Cys147, Cys150, Cys164, Cys167, Cys186, Cys189, Cys200, and Cys203. 4 CXXCXGXG motif repeats span residues 147-154, 164-171, 186-193, and 200-207; these read CQPCDGSG, CPTCGGIG, CPRCHGQG, and CTSCHGEG.

Belongs to the DnaJ family. Homodimer. Requires Zn(2+) as cofactor.

It is found in the cytoplasm. Its function is as follows. Participates actively in the response to hyperosmotic and heat shock by preventing the aggregation of stress-denatured proteins and by disaggregating proteins, also in an autonomous, DnaK-independent fashion. Unfolded proteins bind initially to DnaJ; upon interaction with the DnaJ-bound protein, DnaK hydrolyzes its bound ATP, resulting in the formation of a stable complex. GrpE releases ADP from DnaK; ATP binding to DnaK triggers the release of the substrate protein, thus completing the reaction cycle. Several rounds of ATP-dependent interactions between DnaJ, DnaK and GrpE are required for fully efficient folding. Also involved, together with DnaK and GrpE, in the DNA replication of plasmids through activation of initiation proteins. The sequence is that of Chaperone protein DnaJ from Pseudomonas putida (strain ATCC 47054 / DSM 6125 / CFBP 8728 / NCIMB 11950 / KT2440).